Here is a 290-residue protein sequence, read N- to C-terminus: 33 kDa chaperonin (290 aa).

Intrachain disulfides connect cysteine 235–cysteine 237 and cysteine 268–cysteine 271.

This sequence belongs to the HSP33 family. Post-translationally, under oxidizing conditions two disulfide bonds are formed involving the reactive cysteines. Under reducing conditions zinc is bound to the reactive cysteines and the protein is inactive.

It localises to the cytoplasm. In terms of biological role, redox regulated molecular chaperone. Protects both thermally unfolding and oxidatively damaged proteins from irreversible aggregation. Plays an important role in the bacterial defense system toward oxidative stress. This Streptococcus pyogenes serotype M3 (strain ATCC BAA-595 / MGAS315) protein is 33 kDa chaperonin.